A 189-amino-acid polypeptide reads, in one-letter code: TATA-box-binding protein 1 (189 aa).

2 repeat units span residues 10-86 and 101-179.

This sequence belongs to the TBP family.

In terms of biological role, general factor that plays a role in the activation of archaeal genes transcribed by RNA polymerase. Binds specifically to the TATA box promoter element which lies close to the position of transcription initiation. This is TATA-box-binding protein 1 (tbp1) from Haloferax volcanii (strain ATCC 29605 / DSM 3757 / JCM 8879 / NBRC 14742 / NCIMB 2012 / VKM B-1768 / DS2) (Halobacterium volcanii).